Reading from the N-terminus, the 4377-residue chain is E3 ubiquitin-protein ligase HUWE1 (4377 aa).

Phosphoserine is present on residues Ser-648 and Ser-649. 3 disordered regions span residues 706–758 (KADG…VVGT), 978–1001 (DEKAGTTQGGKRSDGEQDGTAGSM), and 1018–1038 (TLAPMETDEPSSSDSKGKSKI). Acidic residues predominate over residues 725-735 (ASSEDEEEEEV). Residues 737–756 (AMQSFNSAQQNETEPNQQVV) show a composition bias toward polar residues. At Ser-740 the chain carries Phosphoserine. Ser-1084 carries the phosphoserine modification. The segment covering 1291 to 1302 (LSKEKEGSRGEE) has biased composition (basic and acidic residues). The disordered stretch occupies residues 1291 to 1320 (LSKEKEGSRGEEEAGQEEGGSRREPQVNQQ). Positions 1316–1355 (QVNQQQLQQLMDMGFTREHAMEALLNTSTMEQATEYLLTH) constitute a UBA domain. A phosphoserine mark is found at Ser-1368, Ser-1370, Ser-1382, and Ser-1395. The 20-residue stretch at 1370 to 1389 (SEEDQMMRAIAMSLGQDIPM) folds into the UIM domain. The interval 1396–1415 (PEEVACRKEEEERKAREKQE) is disordered. The 78-residue stretch at 1603 to 1680 (RAQMTKYLQS…ETGNRRPVML (78 aa)) folds into the WWE domain. The interval 1690 to 1733 (KNSKSSNGQELEKTLEESKETDIKHKENKGNDIPLALESTNTEK) is disordered. Residues 1699-1719 (ELEKTLEESKETDIKHKENKG) are compositionally biased toward basic and acidic residues. Ser-1907 is modified (phosphoserine). 3 disordered regions span residues 2019–2065 (APAE…SKPL), 2262–2343 (SLFG…QEMQ), and 2355–2479 (LLER…ASPL). A compositionally biased stretch (polar residues) spans 2022-2033 (ETSTTGTSQGEA). Phosphothreonine is present on Thr-2035. Over residues 2037–2057 (EETREGKKDKEGDRTSEEGKQ) the composition is skewed to basic and acidic residues. 2 stretches are compositionally biased toward low complexity: residues 2262-2271 (SLFGSKSASS) and 2278-2291 (DAQGASQDSSSHQQ). Phosphoserine is present on Ser-2266. Lys-2267 carries the post-translational modification N6-acetyllysine. Acidic residues-rich tracts occupy residues 2295-2306 (EPGEAEVQEEDH) and 2314-2325 (ADGDIMDGEAET). A phosphoserine mark is found at Ser-2362, Ser-2365, and Ser-2391. Residues 2388–2398 (SNLSQASTLQA) show a composition bias toward polar residues. The segment covering 2408-2472 (DPEDEEEHTQ…SEMELDEDYP (65 aa)) has biased composition (acidic residues). Residues Ser-2527, Ser-2532, and Ser-2535 each carry the phosphoserine modification. Thr-2554 bears the Phosphothreonine mark. Phosphoserine occurs at positions 2584, 2595, and 2619. Residues 2704–2716 (IIDKGKEDKENRD) show a composition bias toward basic and acidic residues. Disordered stretches follow at residues 2704-2970 (IIDK…GVDP), 2991-3012 (IRPPTRSAPSSNSSAPAVVGNP), and 3036-3059 (QQRAEQQRRELAQNASSDTPMDPV). Over residues 2717-2736 (QSAQCTVTKTNDSTEQNVSD) the composition is skewed to polar residues. A compositionally biased stretch (low complexity) spans 2738–2756 (TPMPDSYPTTPSSTDAPTS). At Thr-2751 the chain carries Phosphothreonine. Composition is skewed to polar residues over residues 2818 to 2835 (AETTQMELSPAPTITSLS), 2847 to 2864 (AVSSQLEGSPMDTSSLAS), and 2877 to 2890 (AGSSEQPTAGSSTP). Phosphoserine is present on residues Ser-2826, Ser-2833, Ser-2835, Ser-2861, Ser-2887, and Ser-2888. Thr-2889 is subject to Phosphothreonine. Low complexity-rich tracts occupy residues 2913–2932 (PPEDSSPPASSESSSTRDSA) and 2993–3007 (PPTRSAPSSNSSAPA). Position 2918 is a phosphoserine (Ser-2918). A phosphoserine mark is found at Ser-3116, Ser-3117, Ser-3122, Ser-3127, and Ser-3135. Arg-3149 carries the omega-N-methylarginine modification. Disordered regions lie at residues 3243–3266 (PKLSTSEERGKKSSKSCASSSHEN), 3352–3383 (TQQRTKETNCESDRERGSKQACSPCSSQSSSS), 3405–3429 (GKNSVKSVPVSSGGEGETSPHSLEA), 3471–3514 (SEVQ…TTPV), and 3539–3566 (TPTTATTTVSTSTTKGSKSPAKVGEGGS). Residues 3355 to 3369 (RTKETNCESDRERGS) are compositionally biased toward basic and acidic residues. The segment covering 3370–3383 (KQACSPCSSQSSSS) has biased composition (low complexity). Composition is skewed to low complexity over residues 3475–3503 (TNSSNSGSSTAATSNTSTTTTTTTTATAP) and 3539–3552 (TPTTATTTVSTSTT). A phosphoserine mark is found at Ser-3557, Ser-3663, Ser-3753, Ser-3758, Ser-3760, and Ser-3761. A disordered region spans residues 3738–3759 (TRRANKKAKQTGRLGSSGLGSA). Residues 3749-3759 (GRLGSSGLGSA) show a composition bias toward low complexity. 2 disordered regions span residues 3782-3850 (EGQR…LPLL) and 3897-3951 (RESK…SSSL). Residues 3794–3803 (TSESSNQSET) show a composition bias toward polar residues. Residues Ser-3810, Ser-3818, and Ser-3830 each carry the phosphoserine modification. Polar residues predominate over residues 3817–3828 (PSPSAQDTQSIV). Thr-3833 bears the Phosphothreonine mark. Composition is skewed to basic and acidic residues over residues 3836–3845 (GEKEKEEKPP) and 3897–3918 (RESKPPVRDTRESQLAHIKDEP). A phosphoserine mark is found at Ser-3909 and Ser-3922. Positions 3919 to 3928 (PPLSPAPLTP) are enriched in pro residues. Phosphothreonine occurs at positions 3927 and 3930. The segment covering 3941–3951 (EPSSMHISSSL) has biased composition (polar residues). In terms of domain architecture, HECT spans 4041–4377 (SPEEMKNRLY…QECSEGFGLA (337 aa)). Position 4274 is a phosphotyrosine (Tyr-4274). The active-site Glycyl thioester intermediate is the Cys-4344.

It belongs to the UPL family. TOM1/PTR1 subfamily. As to quaternary structure, interacts with isoform p19ARF of CDKN2A which strongly inhibits HUWE1 ubiquitin ligase activity. Interacts with MYCN, POLB and CDC6. Interacts with PA2G4. Interacts with NR1D1. Interacts with AMBRA1. Interacts with HAPSTR1. Interacts with HAPSTR2. In hepatocytes, interacts with PAQR3; the interaction promotes PPARA poylubiquitination and STUB1-mediated degradation. Phosphorylated on tyrosine; phosphorylation is probably required for its ability to inhibit TP53 transactivation. Widely expressed.

It localises to the cytoplasm. It is found in the nucleus. Its subcellular location is the mitochondrion. The enzyme catalyses S-ubiquitinyl-[E2 ubiquitin-conjugating enzyme]-L-cysteine + [acceptor protein]-L-lysine = [E2 ubiquitin-conjugating enzyme]-L-cysteine + N(6)-ubiquitinyl-[acceptor protein]-L-lysine.. It functions in the pathway protein modification; protein ubiquitination. In terms of biological role, E3 ubiquitin-protein ligase which mediates ubiquitination and subsequent proteasomal degradation of target proteins. Regulates apoptosis by catalyzing the polyubiquitination and degradation of MCL1. Mediates monoubiquitination of DNA polymerase beta (POLB) at 'Lys-41', 'Lys-61' and 'Lys-81', thereby playing a role in base-excision repair. Also ubiquitinates the p53/TP53 tumor suppressor and core histones including H1, H2A, H2B, H3 and H4. Ubiquitinates MFN2 to negatively regulate mitochondrial fusion in response to decreased stearoylation of TFRC. Ubiquitination of MFN2 also takes place following induction of mitophagy; AMBRA1 acts as a cofactor for HUWE1-mediated ubiquitination. Regulates neural differentiation and proliferation by catalyzing the polyubiquitination and degradation of MYCN. May regulate abundance of CDC6 after DNA damage by polyubiquitinating and targeting CDC6 to degradation. Mediates polyubiquitination of PA2G4. Acts in concert with MYCBP2 to regulate the circadian clock gene expression by promoting the lithium-induced ubiquination and degradation of NR1D1. Binds to an upstream initiator-like sequence in the preprodynorphin gene. Mediates HAPSTR1 degradation, but is also a required cofactor in the pathway by which HAPSTR1 governs stress signaling. Acts as a regulator of the JNK and NF-kappa-B signaling pathways by mediating assembly of heterotypic 'Lys-63'-/'Lys-48'-linked branched ubiquitin chains that are then recognized by TAB2: HUWE1 mediates branching of 'Lys-48'-linked chains of substrates initially modified with 'Lys-63'-linked conjugates by TRAF6. 'Lys-63'-/'Lys-48'-linked branched ubiquitin chains protect 'Lys-63'-linkages from CYLD deubiquitination. Ubiquitinates PPARA in hepatocytes. In Mus musculus (Mouse), this protein is E3 ubiquitin-protein ligase HUWE1 (Huwe1).